The chain runs to 500 residues: NAD(P)H-quinone oxidoreductase chain 4, chloroplastic (500 aa).

Transmembrane regions (helical) follow at residues 4–24 (FPWL…IFFL), 35–55 (YTIC…CYHF), 87–107 (IGPV…AWPV), 113–130 (LFHF…GSFS), 134–154 (LLLF…LLSM), 167–187 (FILY…GVGL), 207–227 (VALE…KLPI), 242–262 (HYST…YGLI), 272–292 (AHSI…IYAA), 305–325 (IAYS…SITD), 330–350 (GAIL…FLAG), 386–406 (LALP…GIIT), 416–436 (IVIT…LLSM), and 462–482 (LFVS…PDFV).

The protein belongs to the complex I subunit 4 family.

It is found in the plastid. It localises to the chloroplast thylakoid membrane. It carries out the reaction a plastoquinone + NADH + (n+1) H(+)(in) = a plastoquinol + NAD(+) + n H(+)(out). The enzyme catalyses a plastoquinone + NADPH + (n+1) H(+)(in) = a plastoquinol + NADP(+) + n H(+)(out). The protein is NAD(P)H-quinone oxidoreductase chain 4, chloroplastic of Guizotia abyssinica (Niger).